The primary structure comprises 130 residues: Sirohydrochlorin cobaltochelatase (130 aa).

Histidine 12 acts as the Proton acceptor in catalysis. Residue histidine 12 coordinates Co(2+). Ni(2+) is bound at residue histidine 12. Substrate is bound by residues glutamate 48 and 73-78; that span reads LASGVH. Position 78 (histidine 78) interacts with Co(2+). Histidine 78 is a binding site for Ni(2+).

This sequence belongs to the CbiX family. CbiXS subfamily. Homotetramer; dimer of dimers.

The catalysed reaction is Co-sirohydrochlorin + 2 H(+) = sirohydrochlorin + Co(2+). It catalyses the reaction Ni-sirohydrochlorin + 2 H(+) = sirohydrochlorin + Ni(2+). It functions in the pathway cofactor biosynthesis; adenosylcobalamin biosynthesis; cob(II)yrinate a,c-diamide from sirohydrochlorin (anaerobic route): step 1/10. Functionally, catalyzes the insertion of Co(2+) into sirohydrochlorin as part of the anaerobic pathway to cobalamin biosynthesis (Potential). Involved in the biosynthesis of the unique nickel-containing tetrapyrrole coenzyme F430, the prosthetic group of methyl-coenzyme M reductase (MCR), which plays a key role in methanogenesis and anaerobic methane oxidation. Catalyzes the insertion of Ni(2+) into sirohydrochlorin to yield Ni-sirohydrochlorin. The sequence is that of Sirohydrochlorin cobaltochelatase from Methanosarcina acetivorans (strain ATCC 35395 / DSM 2834 / JCM 12185 / C2A).